Consider the following 883-residue polypeptide: Serine/threonine-protein kinase greatwall (883 aa).

Met-1 is modified (N-acetylmethionine). Positions 35–839 (FTIVKPISRG…IKELKCHPLF (805 aa)) constitute a Protein kinase domain. ATP contacts are provided by residues 41 to 49 (ISRGAFGKV) and Lys-62. Catalysis depends on Asp-156, which acts as the Proton acceptor. Residues Thr-209 and Thr-224 each carry the phosphothreonine modification. Phosphoserine occurs at positions 295, 373, and 456. Thr-523 carries the phosphothreonine modification. Phosphoserine occurs at positions 555, 559, 634, 661, and 672. Thr-726 carries the post-translational modification Phosphothreonine. Ser-729 carries the phosphoserine modification. Position 745 is a phosphothreonine; by CDK1 (Thr-745). An AGC-kinase C-terminal domain is found at 840-883 (SDVDWENLQHQTMPFIPQPDDETDTSYFEARNNAQHLTVSGFSL). Ser-879 and Ser-882 each carry phosphoserine.

Belongs to the protein kinase superfamily. AGC Ser/Thr protein kinase family. In terms of processing, phosphorylation at Thr-745 by CDK1 during M phase activates its kinase activity. Maximum phosphorylation occurs in prometaphase.

The protein localises to the cytoplasm. It localises to the cytoskeleton. Its subcellular location is the microtubule organizing center. It is found in the centrosome. The protein resides in the nucleus. The enzyme catalyses L-seryl-[protein] + ATP = O-phospho-L-seryl-[protein] + ADP + H(+). The catalysed reaction is L-threonyl-[protein] + ATP = O-phospho-L-threonyl-[protein] + ADP + H(+). In terms of biological role, serine/threonine kinase that plays a key role in M phase by acting as a regulator of mitosis entry and maintenance. Acts by promoting the inactivation of protein phosphatase 2A (PP2A) during M phase: does not directly inhibit PP2A but acts by mediating phosphorylation and subsequent activation of ARPP19 and ENSA at 'Ser-62' and 'Ser-67', respectively. ARPP19 and ENSA are phosphatase inhibitors that specifically inhibit the PPP2R2D (PR55-delta) subunit of PP2A. Inactivation of PP2A during M phase is essential to keep cyclin-B1-CDK1 activity high. Following DNA damage, it is also involved in checkpoint recovery by being inhibited. The chain is Serine/threonine-protein kinase greatwall (MASTL) from Canis lupus familiaris (Dog).